We begin with the raw amino-acid sequence, 603 residues long: DNA mismatch repair protein MutL (603 aa).

Positions lysine 361–proline 383 are disordered.

The protein belongs to the DNA mismatch repair MutL/HexB family.

In terms of biological role, this protein is involved in the repair of mismatches in DNA. It is required for dam-dependent methyl-directed DNA mismatch repair. May act as a 'molecular matchmaker', a protein that promotes the formation of a stable complex between two or more DNA-binding proteins in an ATP-dependent manner without itself being part of a final effector complex. In Listeria monocytogenes serotype 4b (strain CLIP80459), this protein is DNA mismatch repair protein MutL.